The chain runs to 275 residues: 2-dehydro-3-deoxyphosphooctonate aldolase (275 aa).

Belongs to the KdsA family.

It is found in the cytoplasm. It catalyses the reaction D-arabinose 5-phosphate + phosphoenolpyruvate + H2O = 3-deoxy-alpha-D-manno-2-octulosonate-8-phosphate + phosphate. It functions in the pathway carbohydrate biosynthesis; 3-deoxy-D-manno-octulosonate biosynthesis; 3-deoxy-D-manno-octulosonate from D-ribulose 5-phosphate: step 2/3. It participates in bacterial outer membrane biogenesis; lipopolysaccharide biosynthesis. The polypeptide is 2-dehydro-3-deoxyphosphooctonate aldolase (Francisella tularensis subsp. novicida (strain U112)).